The chain runs to 253 residues: Peptidase inhibitor R3HDML (253 aa).

Positions methionine 1–leucine 24 are cleaved as a signal peptide. Residues isoleucine 25–arginine 56 constitute a propeptide that is removed on maturation. The SCP domain maps to leucine 67–tyrosine 207. Residue asparagine 120 is glycosylated (N-linked (GlcNAc...) asparagine).

The protein belongs to the CRISP family.

The protein localises to the secreted. Functionally, putative serine protease inhibitor. The chain is Peptidase inhibitor R3HDML (R3HDML) from Homo sapiens (Human).